A 124-amino-acid chain; its full sequence is Small ribosomal subunit protein uS12 (124 aa).

Residues 1 to 23 form a disordered region; that stretch reads MATINQLVRKPRRSKVTKSNSAA. D89 carries the 3-methylthioaspartic acid modification.

It belongs to the universal ribosomal protein uS12 family. In terms of assembly, part of the 30S ribosomal subunit. Contacts proteins S8 and S17. May interact with IF1 in the 30S initiation complex.

Its function is as follows. With S4 and S5 plays an important role in translational accuracy. Interacts with and stabilizes bases of the 16S rRNA that are involved in tRNA selection in the A site and with the mRNA backbone. Located at the interface of the 30S and 50S subunits, it traverses the body of the 30S subunit contacting proteins on the other side and probably holding the rRNA structure together. The combined cluster of proteins S8, S12 and S17 appears to hold together the shoulder and platform of the 30S subunit. In Pseudoalteromonas translucida (strain TAC 125), this protein is Small ribosomal subunit protein uS12.